The primary structure comprises 278 residues: Autotransporter adhesin BtaF (278 aa).

Residues 1–29 form the signal peptide; it reads MKLPPVFVFELVENQGLANIALIRPRVIA. Residues 30 to 182 form a surface exposed passenger domain region; it reads PDNNLRPGGI…RAAIRQNSAA (153 aa). Residues 186–224 form an outer membrane translocation of the passenger domain region; sequence LGQRVDGLQGQINSARKEARAGAANAAALSGLRYDNRPG. The translocator domain stretch occupies residues 225–278; it reads KVSIATGVGGFKGSTALAAGIGYTSKNENARYNVSVAYNEAGTSWNAGASFTLN.

It belongs to the autotransporter-2 (AT-2) (TC 1.B.40) family. In terms of assembly, homotrimer.

The protein localises to the cell surface. It localises to the cell outer membrane. Participates in bacterial attachment to several surfaces, including various extracellular matrix (ECM) components and a hydrophobic abiotic surface. Involved in adhesion to host epithelial cells and is required for full virulence in mice. Also implicated in the resistance to porcine serum. This chain is Autotransporter adhesin BtaF, found in Brucella suis biovar 1 (strain 1330).